A 227-amino-acid chain; its full sequence is Ribonuclease 3 (227 aa).

In terms of domain architecture, RNase III spans 4 to 133 (FEKLETLLGY…LIAAIYLDSN (130 aa)). Residue glutamate 46 participates in Mg(2+) binding. Aspartate 50 is an active-site residue. Positions 119 and 122 each coordinate Mg(2+). Glutamate 122 is a catalytic residue. Positions 158–226 (DPKTALQEWA…ARCLLHRLKN (69 aa)) constitute a DRBM domain.

This sequence belongs to the ribonuclease III family. Homodimer. The cofactor is Mg(2+).

Its subcellular location is the cytoplasm. It catalyses the reaction Endonucleolytic cleavage to 5'-phosphomonoester.. Functionally, digests double-stranded RNA. Involved in the processing of primary rRNA transcript to yield the immediate precursors to the large and small rRNAs (23S and 16S). Processes some mRNAs, and tRNAs when they are encoded in the rRNA operon. Processes pre-crRNA and tracrRNA of type II CRISPR loci if present in the organism. The chain is Ribonuclease 3 from Rickettsia typhi (strain ATCC VR-144 / Wilmington).